The chain runs to 154 residues: UPF0225 protein YPTB2098 (154 aa).

Belongs to the UPF0225 family.

The polypeptide is UPF0225 protein YPTB2098 (Yersinia pseudotuberculosis serotype I (strain IP32953)).